Reading from the N-terminus, the 894-residue chain is Bifunctional enzyme RhaA/RhaB (894 aa).

The interval 1–465 (MGEYRLAVDI…TAFPVTYFLP (465 aa)) is rhamnulokinase. Residues 466–894 (QRSESHVSSR…KRESEKAKQR (429 aa)) are L-rhamnose isomerase. 3 residues coordinate Mn(2+): histidine 730, aspartate 762, and aspartate 764.

It in the N-terminal section; belongs to the rhamnulokinase family. The protein in the C-terminal section; belongs to the rhamnose isomerase family. Requires Mn(2+) as cofactor.

It localises to the cytoplasm. The catalysed reaction is L-rhamnulose + ATP = L-rhamnulose 1-phosphate + ADP + H(+). It carries out the reaction L-rhamnopyranose = L-rhamnulose. It participates in carbohydrate degradation; L-rhamnose degradation; glycerone phosphate from L-rhamnose: step 1/3. The protein operates within carbohydrate degradation; L-rhamnose degradation; glycerone phosphate from L-rhamnose: step 2/3. The polypeptide is Bifunctional enzyme RhaA/RhaB (rhaAB) (Shouchella clausii (strain KSM-K16) (Alkalihalobacillus clausii)).